Reading from the N-terminus, the 96-residue chain is Putative pterin-4-alpha-carbinolamine dehydratase (96 aa).

This sequence belongs to the pterin-4-alpha-carbinolamine dehydratase family.

It carries out the reaction (4aS,6R)-4a-hydroxy-L-erythro-5,6,7,8-tetrahydrobiopterin = (6R)-L-erythro-6,7-dihydrobiopterin + H2O. This chain is Putative pterin-4-alpha-carbinolamine dehydratase, found in Novosphingobium aromaticivorans (strain ATCC 700278 / DSM 12444 / CCUG 56034 / CIP 105152 / NBRC 16084 / F199).